The chain runs to 154 residues: 3-hydroxyacyl-[acyl-carrier-protein] dehydratase FabZ (154 aa).

Histidine 54 is an active-site residue.

It belongs to the thioester dehydratase family. FabZ subfamily.

The protein resides in the cytoplasm. The catalysed reaction is a (3R)-hydroxyacyl-[ACP] = a (2E)-enoyl-[ACP] + H2O. Involved in unsaturated fatty acids biosynthesis. Catalyzes the dehydration of short chain beta-hydroxyacyl-ACPs and long chain saturated and unsaturated beta-hydroxyacyl-ACPs. The polypeptide is 3-hydroxyacyl-[acyl-carrier-protein] dehydratase FabZ (Shewanella oneidensis (strain ATCC 700550 / JCM 31522 / CIP 106686 / LMG 19005 / NCIMB 14063 / MR-1)).